The sequence spans 127 residues: CKVAHTYIHRRQTTDRFSSLHRPPDPDRWLLLPCCSEEARGPPPSPAPLPARLFPGRASSPLARTPSAGAASACKPLLERLPTPSRRRRRRRATRRARSRMPRTTPWRAPRAPARAWWTRPRMARAR.

The disordered stretch occupies residues 39 to 127 (ARGPPPSPAP…WTRPRMARAR (89 aa)). A compositionally biased stretch (basic residues) spans 85 to 101 (SRRRRRRRATRRARSRM). Over residues 102-121 (PRTTPWRAPRAPARAWWTRP) the composition is skewed to low complexity.

The protein is Cold-regulated protein 1 of Hordeum vulgare (Barley).